The chain runs to 101 residues: Small ribosomal subunit protein bS18c (101 aa).

This sequence belongs to the bacterial ribosomal protein bS18 family. In terms of assembly, part of the 30S ribosomal subunit.

It is found in the plastid. The protein localises to the chloroplast. In Arabidopsis thaliana (Mouse-ear cress), this protein is Small ribosomal subunit protein bS18c (rps18).